Consider the following 297-residue polypeptide: D-alanine--D-alanine ligase (297 aa).

The ATP-grasp domain occupies 103-293; the sequence is KEILMHHRMP…FDSFVKSILE (191 aa). 129–180 is a binding site for ATP; that stretch reads ISFPVAVKPSSGGSSIATFKVKSLEELENAYQQASKHGEVMIEQWVTGKEIT. 3 residues coordinate Mg(2+): Asp247, Glu260, and Asn262.

It belongs to the D-alanine--D-alanine ligase family. Mg(2+) is required as a cofactor. Requires Mn(2+) as cofactor.

It is found in the cytoplasm. The enzyme catalyses 2 D-alanine + ATP = D-alanyl-D-alanine + ADP + phosphate + H(+). It participates in cell wall biogenesis; peptidoglycan biosynthesis. Cell wall formation. This chain is D-alanine--D-alanine ligase, found in Francisella philomiragia subsp. philomiragia (strain ATCC 25017 / CCUG 19701 / FSC 153 / O#319-036).